The sequence spans 227 residues: Holliday junction branch migration complex subunit RuvA (227 aa).

Positions 1-64 (MFESISGILT…EDALRLFGFS (64 aa)) are domain I. The segment at 65–143 (NVQERTLFLS…LTDAASCAQS (79 aa)) is domain II. Positions 144 to 158 (QTDDRAAHPSNLGCA) are flexible linker. The interval 159–227 (PHAREIEDLV…HPHAVAPAAE (69 aa)) is domain III.

This sequence belongs to the RuvA family. As to quaternary structure, homotetramer. Forms an RuvA(8)-RuvB(12)-Holliday junction (HJ) complex. HJ DNA is sandwiched between 2 RuvA tetramers; dsDNA enters through RuvA and exits via RuvB. An RuvB hexamer assembles on each DNA strand where it exits the tetramer. Each RuvB hexamer is contacted by two RuvA subunits (via domain III) on 2 adjacent RuvB subunits; this complex drives branch migration. In the full resolvosome a probable DNA-RuvA(4)-RuvB(12)-RuvC(2) complex forms which resolves the HJ.

It is found in the cytoplasm. The RuvA-RuvB-RuvC complex processes Holliday junction (HJ) DNA during genetic recombination and DNA repair, while the RuvA-RuvB complex plays an important role in the rescue of blocked DNA replication forks via replication fork reversal (RFR). RuvA specifically binds to HJ cruciform DNA, conferring on it an open structure. The RuvB hexamer acts as an ATP-dependent pump, pulling dsDNA into and through the RuvAB complex. HJ branch migration allows RuvC to scan DNA until it finds its consensus sequence, where it cleaves and resolves the cruciform DNA. The chain is Holliday junction branch migration complex subunit RuvA from Treponema pallidum (strain Nichols).